Consider the following 46-residue polypeptide: Spectrin alpha chain, non-erythrocytic 1 (46 aa).

6 Spectrin repeats span residues 1-5 (AQLAD), 7-14 (FHLQQFFR), 15-20 (SQLLGS), 21-26 (AHEVQR), 27-35 (LAQFVEHWK), and 39-46 (DLFLTFAK).

The protein belongs to the spectrin family. In terms of assembly, associates with the gamma-tubulin complex in brain, but not in kidney, liver, sperm, or uterus. Like erythrocyte spectrin, the spectrin-like proteins are capable of forming dimers which can further associate to tetramers. Interacts with isoform 1 of ACP1. Interacts with CALM and EMD. Interacts (via C-terminal spectrin repeats) with TRPC4. Identified in a complex with ACTN4, CASK, IQGAP1, MAGI2, NPHS1 and SPTBN1. Interacts with CLN3; this interaction regulates the fodrin localization at the plasma membrane.

The protein resides in the cytoplasm. It is found in the cytoskeleton. The protein localises to the cell cortex. Functionally, fodrin, which seems to be involved in secretion, interacts with calmodulin in a calcium-dependent manner and is thus candidate for the calcium-dependent movement of the cytoskeleton at the membrane. The polypeptide is Spectrin alpha chain, non-erythrocytic 1 (SPTAN1) (Capra hircus (Goat)).